The sequence spans 168 residues: Mediator of RNA polymerase II transcription subunit 31 (168 aa).

Positions 113–159 (EGEDQDVEESEEETVENEQKESEDEEDVVIVEKPEDEQEEQAEEAAE) are enriched in acidic residues. The disordered stretch occupies residues 113–168 (EGEDQDVEESEEETVENEQKESEDEEDVVIVEKPEDEQEEQAEEAAEPTDTSLLNT).

The protein belongs to the Mediator complex subunit 31 family. As to quaternary structure, component of the Mediator complex.

The protein resides in the nucleus. Functionally, component of the Mediator complex, a coactivator involved in the regulated transcription of nearly all RNA polymerase II-dependent genes. Mediator functions as a bridge to convey information from gene-specific regulatory proteins to the basal RNA polymerase II transcription machinery. Mediator is recruited to promoters by direct interactions with regulatory proteins and serves as a scaffold for the assembly of a functional preinitiation complex with RNA polymerase II and the general transcription factors. The chain is Mediator of RNA polymerase II transcription subunit 31 (mdt-31) from Caenorhabditis briggsae.